A 115-amino-acid polypeptide reads, in one-letter code: Large ribosomal subunit protein bL21 (115 aa).

The protein belongs to the bacterial ribosomal protein bL21 family. In terms of assembly, part of the 50S ribosomal subunit. Contacts protein L20.

In terms of biological role, this protein binds to 23S rRNA in the presence of protein L20. The chain is Large ribosomal subunit protein bL21 from Coxiella burnetii (strain Dugway 5J108-111).